The chain runs to 1865 residues: Transcription initiation factor TFIID subunit 1 (1865 aa).

Positions 1–27 (MLLPATGASRSAAIMSDTDSDEDSSGG) are disordered. Positions 1–409 (MLLPATGASR…VTQLHWEDDI (409 aa)) constitute a Protein kinase 1 domain. At S131 the chain carries Phosphoserine; by autocatalysis. The segment at 144 to 199 (EDIDCKLMPPPPPPPGPVKKEKDQDGLTGEKVDFSSSSDSESEMGPQEAAQAESKD) is disordered. Residues 151-160 (MPPPPPPPGP) are compositionally biased toward pro residues. Over residues 161–176 (VKKEKDQDGLTGEKVD) the composition is skewed to basic and acidic residues. S302 carries the phosphoserine; by autocatalysis modification. Residues 509–530 (PDEKEEATSNSPSKENKKESSL) form a disordered region. Positions 512–971 (KEEATSNSPS…KIPNKPTQQK (460 aa)) are histone acetyltransferase (HAT). Position 539 is an N6-acetyllysine (K539). Glycyl lysine isopeptide (Lys-Gly) (interchain with G-Cter in SUMO2) cross-links involve residues K544 and K557. Disordered regions lie at residues 964–983 (PNKPTQQKDDKEPQPVKKTV) and 1228–1252 (RLKRNQEKEKLKGPPEKKPKKMKER). Basic and acidic residues-rich tracts occupy residues 969 to 978 (QQKDDKEPQP) and 1228 to 1244 (RLKRNQEKEKLKGPPEK). Residues 1190-1268 (VRIRTTKDEE…CGACGAIGHM (79 aa)) constitute a DNA-binding region (HMG box). The segment at 1337–1624 (VLKFPKQQLP…TAKEAALEEA (288 aa)) is interaction with ASF1A and ASF1B. Residues 1346 to 1353 (PPKKKRRV) carry the Nuclear localization signal motif. Bromo domains lie at 1371 to 1479 (RRRT…LKEK) and 1493 to 1602 (LLDD…LTEY). The Protein kinase 2 domain maps to 1420-1865 (MDLQTLRENV…AGDSDMDSDE (446 aa)). Residues 1625-1865 (ELESLDPMTP…AGDSDMDSDE (241 aa)) form a disordered region. Over residues 1633 to 1642 (TPGPYTPQPP) the composition is skewed to pro residues. A compositionally biased stretch (polar residues) spans 1646–1682 (DNSTSLSVSRDASVYQDESNMSVLDIPSATSEKQLTQ). A phosphoserine mark is found at S1664 and S1667. Acidic residues-rich tracts occupy residues 1683–1697 (EGEDGDGDLADEEEG) and 1715–1730 (EGEDDEEDAGSDEEGD). Low complexity predominate over residues 1739–1751 (SESGSDSDVGSGS). S1773, S1776, and S1794 each carry phosphoserine. Residues 1804 to 1814 (KSNTQDTSFSS) show a composition bias toward polar residues. Acidic residues predominate over residues 1820-1829 (VSEEEEDEEE). A Phosphoserine modification is found at S1821. Polar residues predominate over residues 1832 to 1841 (SGPSVLSQVH).

This sequence belongs to the TAF1 family. As to quaternary structure, component of the TFIID basal transcription factor complex, composed of TATA-box-binding protein TBP, and a number of TBP-associated factors (TAFs), including TAF1, TAF2, TAF3, TAF4, TAF5, TAF6, TAF7, TAF8, TAF9, TAF10, TAF11, TAF12 and TAF13. Interacts with TAF7; the interaction is direct. TAF1, when part of the TFIID complex, interacts with C-terminus of TP53. Part of a TFIID-containing RNA polymerase II pre-initiation complex that is composed of TBP and at least GTF2A1, GTF2A2, GTF2E1, GTF2E2, GTF2F1, GTF2H2, GTF2H3, GTF2H4, GTF2H5, GTF2B, TCEA1, ERCC2, ERCC3, TAF1, TAF2, TAF3, TAF4, TAF5, TAF6, TAF7, TAF8, TAF9, TAF10, TAF11, TAF12 and TAF13. Component of some MLL1/MLL complex, at least composed of the core components KMT2A/MLL1, ASH2L, HCFC1/HCF1, WDR5 and RBBP5, as well as the facultative components BACC1, CHD8, E2F6, HSP70, INO80C, KANSL1, LAS1L, MAX, MCRS1, MGA, KAT8/MOF, PELP1, PHF20, PRP31, RING2, RUVB1/TIP49A, RUVB2/TIP49B, SENP3, TAF1, TAF4, TAF6, TAF7, TAF9 and TEX10. RB1 interacts with the N-terminal domain of TAF1. Interacts with ASF1A and ASF1B. Interacts (via bromo domains) with acetylated lysine residues on the N-terminus of histone H1.4, H2A, H2B, H3 and H4 (in vitro). Mg(2+) serves as cofactor. In terms of processing, phosphorylated by casein kinase II in vitro.

The protein localises to the nucleus. It carries out the reaction L-seryl-[protein] + ATP = O-phospho-L-seryl-[protein] + ADP + H(+). The enzyme catalyses L-threonyl-[protein] + ATP = O-phospho-L-threonyl-[protein] + ADP + H(+). The catalysed reaction is L-lysyl-[protein] + acetyl-CoA = N(6)-acetyl-L-lysyl-[protein] + CoA + H(+). Its activity is regulated as follows. Autophosphorylates on Ser residues. Inhibited by retinoblastoma tumor suppressor protein, RB1. Binding to TAF1 or CIITA inhibits the histone acetyltransferase activity. In terms of biological role, the TFIID basal transcription factor complex plays a major role in the initiation of RNA polymerase II (Pol II)-dependent transcription. TFIID recognizes and binds promoters with or without a TATA box via its subunit TBP, a TATA-box-binding protein, and promotes assembly of the pre-initiation complex (PIC). The TFIID complex consists of TBP and TBP-associated factors (TAFs), including TAF1, TAF2, TAF3, TAF4, TAF5, TAF6, TAF7, TAF8, TAF9, TAF10, TAF11, TAF12 and TAF13. TAF1 is the largest component and core scaffold of the TFIID complex, involved in nucleating complex assembly. TAF1 forms a promoter DNA binding subcomplex of TFIID, together with TAF7 and TAF2. Contains novel N- and C-terminal Ser/Thr kinase domains which can autophosphorylate or transphosphorylate other transcription factors. Phosphorylates TP53 on 'Thr-55' which leads to MDM2-mediated degradation of TP53. Phosphorylates GTF2A1 and GTF2F1 on Ser residues. Possesses DNA-binding activity. Essential for progression of the G1 phase of the cell cycle. The polypeptide is Transcription initiation factor TFIID subunit 1 (Mesocricetus auratus (Golden hamster)).